The chain runs to 178 residues: Interleukin-10 (178 aa).

Positions 1 to 18 (MHSSALLCCLVVLTGVRA) are cleaved as a signal peptide. Cystine bridges form between cysteine 30-cysteine 126 and cysteine 80-cysteine 132. A glycan (N-linked (GlcNAc...) asparagine) is linked at asparagine 134.

The protein belongs to the IL-10 family. Homodimer. Interacts with IL10RA and IL10RB.

The protein resides in the secreted. In terms of biological role, major immune regulatory cytokine that acts on many cells of the immune system where it has profound anti-inflammatory functions, limiting excessive tissue disruption caused by inflammation. Mechanistically, IL10 binds to its heterotetrameric receptor comprising IL10RA and IL10RB leading to JAK1 and STAT2-mediated phosphorylation of STAT3. In turn, STAT3 translocates to the nucleus where it drives expression of anti-inflammatory mediators. Targets antigen-presenting cells (APCs) such as macrophages and monocytes and inhibits their release of pro-inflammatory cytokines including granulocyte-macrophage colony-stimulating factor /GM-CSF, granulocyte colony-stimulating factor/G-CSF, IL-1 alpha, IL-1 beta, IL-6, IL-8 and TNF-alpha. Also interferes with antigen presentation by reducing the expression of MHC-class II and co-stimulatory molecules, thereby inhibiting their ability to induce T cell activation. In addition, controls the inflammatory response of macrophages by reprogramming essential metabolic pathways including mTOR signaling. This Papio hamadryas (Hamadryas baboon) protein is Interleukin-10 (IL10).